We begin with the raw amino-acid sequence, 118 residues long: ATP synthase subunit gamma, chloroplastic (118 aa).

A disulfide bridge connects residues C30 and C36.

It belongs to the ATPase gamma chain family. F-type ATPases have 2 components, CF(1) - the catalytic core - and CF(0) - the membrane proton channel. CF(1) has five subunits: alpha(3), beta(3), gamma(1), delta(1), epsilon(1). CF(0) has four main subunits: a, b, b' and c.

The protein localises to the plastid. Its subcellular location is the chloroplast thylakoid membrane. Its function is as follows. Produces ATP from ADP in the presence of a proton gradient across the membrane. The gamma chain is believed to be important in regulating ATPase activity and the flow of protons through the CF(0) complex. In terms of biological role, inceptin is a proteolytic fragment produced by insect larvae that previously ingested the protein. This peptide mediate plant perception of herbivory through the induction of volatile, phenylpropanoid and protease inhibitor defenses such as ethylene, jasmonic acid and salicylic acid for example. In Vigna unguiculata (Cowpea), this protein is ATP synthase subunit gamma, chloroplastic.